The sequence spans 140 residues: Nucleoside diphosphate kinase (140 aa).

Residues Lys11, Phe59, Arg87, Thr93, Arg104, and Asn114 each contribute to the ATP site. His117 serves as the catalytic Pros-phosphohistidine intermediate.

It belongs to the NDK family. Homotetramer. Mg(2+) is required as a cofactor.

It localises to the cytoplasm. The enzyme catalyses a 2'-deoxyribonucleoside 5'-diphosphate + ATP = a 2'-deoxyribonucleoside 5'-triphosphate + ADP. It carries out the reaction a ribonucleoside 5'-diphosphate + ATP = a ribonucleoside 5'-triphosphate + ADP. Its function is as follows. Major role in the synthesis of nucleoside triphosphates other than ATP. The ATP gamma phosphate is transferred to the NDP beta phosphate via a ping-pong mechanism, using a phosphorylated active-site intermediate. This is Nucleoside diphosphate kinase from Hyphomonas neptunium (strain ATCC 15444).